We begin with the raw amino-acid sequence, 586 residues long: Phosphomethylpyrimidine synthase (586 aa).

Residues 1–59 (MKQSVSAEQIELKSSLPGSKKVYVDGPREGMKVPMREIEQSDTNGVPNPPIRVYDTSGP) form a disordered region. A compositionally biased stretch (basic and acidic residues) spans 22 to 39 (VYVDGPREGMKVPMREIE). Residues asparagine 193, methionine 222, tyrosine 251, histidine 287, 307–309 (SRG), 348–351 (DGLR), and glutamate 387 each bind substrate. Histidine 391 serves as a coordination point for Zn(2+). Tyrosine 414 contacts substrate. Histidine 455 is a Zn(2+) binding site. [4Fe-4S] cluster-binding residues include cysteine 535, cysteine 538, and cysteine 543.

Belongs to the ThiC family. It depends on [4Fe-4S] cluster as a cofactor.

It catalyses the reaction 5-amino-1-(5-phospho-beta-D-ribosyl)imidazole + S-adenosyl-L-methionine = 4-amino-2-methyl-5-(phosphooxymethyl)pyrimidine + CO + 5'-deoxyadenosine + formate + L-methionine + 3 H(+). Its pathway is cofactor biosynthesis; thiamine diphosphate biosynthesis. Functionally, catalyzes the synthesis of the hydroxymethylpyrimidine phosphate (HMP-P) moiety of thiamine from aminoimidazole ribotide (AIR) in a radical S-adenosyl-L-methionine (SAM)-dependent reaction. The chain is Phosphomethylpyrimidine synthase from Bacillus cereus (strain Q1).